Here is a 631-residue protein sequence, read N- to C-terminus: Interferon-induced GTP-binding protein Mx1 (631 aa).

The Dynamin-type G domain occupies 33 to 306 (DLALPAIAVI…LTSHICKSLP (274 aa)). Residues 43–50 (GDQSSGKS) form a G1 motif region. 43 to 50 (GDQSSGKS) lines the GTP pocket. Residues 68 to 70 (VTR) are G2 motif. Residues 144-147 (DLPG) are G3 motif. GTP contacts are provided by residues 144-148 (DLPGI) and 213-216 (TKPD). The interval 213–216 (TKPD) is G4 motif. Residues 245–248 (KCRG) are G5 motif. The interval 307–332 (LLEDQINSSHQSASEELQKYGADIPE) is bundle signaling element (BSE). The interval 332–499 (EDDRTRMSFL…HFQMEQIVYC (168 aa)) is middle domain. The tract at residues 333-601 (DDRTRMSFLV…TSKCSWFLEE (269 aa)) is stalk. Residues 520-522 (KTK) are critical for lipid-binding. One can recognise a GED domain in the interval 543–631 (TTEMTQHLKA…ARQKLAKFSD (89 aa)).

The protein belongs to the TRAFAC class dynamin-like GTPase superfamily. Dynamin/Fzo/YdjA family. As to quaternary structure, homooligomer. Oligomerizes into multimeric filamentous or ring-like structures by virtue of its stalk domain. Oligomerization is critical for GTPase activity, protein stability, and recognition of viral target structures. Interacts with TRPC1, TRPC3, TRPC4, TRPC5, TRPC6 and TRPC7. Interacts with HSPA5. Interacts with TUBB/TUBB5. Interacts with DDX39A and DDX39B. ISGylated.

The protein resides in the cytoplasm. The protein localises to the nucleus. It is found in the endoplasmic reticulum membrane. It localises to the perinuclear region. Interferon-induced dynamin-like GTPase with antiviral activity against influenza A virus, (IAV), influenza B virus (IBV) and Thogoto virus (THOV). Inhibits FLUAV by interfering with the process of primary transcription, probably by affecting the viral polymerase function. The sequence is that of Interferon-induced GTP-binding protein Mx1 (Mx1) from Mus musculus (Mouse).